Here is a 958-residue protein sequence, read N- to C-terminus: Glycine dehydrogenase (decarboxylating) (958 aa).

At Lys705 the chain carries N6-(pyridoxal phosphate)lysine.

It belongs to the GcvP family. As to quaternary structure, the glycine cleavage system is composed of four proteins: P, T, L and H. It depends on pyridoxal 5'-phosphate as a cofactor.

It carries out the reaction N(6)-[(R)-lipoyl]-L-lysyl-[glycine-cleavage complex H protein] + glycine + H(+) = N(6)-[(R)-S(8)-aminomethyldihydrolipoyl]-L-lysyl-[glycine-cleavage complex H protein] + CO2. The glycine cleavage system catalyzes the degradation of glycine. The P protein binds the alpha-amino group of glycine through its pyridoxal phosphate cofactor; CO(2) is released and the remaining methylamine moiety is then transferred to the lipoamide cofactor of the H protein. This is Glycine dehydrogenase (decarboxylating) from Synechococcus sp. (strain CC9902).